Here is a 576-residue protein sequence, read N- to C-terminus: G protein-coupled receptor kinase 6 (576 aa).

Residues 1–185 (MELENIVANT…LERQPVTKNT (185 aa)) form an N-terminal region. Positions 53–171 (YHSLCERQPI…LDSIYFNRFL (119 aa)) constitute an RGS domain. Residues 186 to 448 (FRQYRVLGKG…AREVKEHPLF (263 aa)) enclose the Protein kinase domain. Residues 192-200 (LGKGGFGEV), Lys-215, and 264-270 (TLMNGGD) each bind ATP. The active-site Proton acceptor is Asp-311. 315–318 (ENIL) lines the ATP pocket. In terms of domain architecture, AGC-kinase C-terminal spans 449–514 (KKLNFKRLGA…GSVSIPWQNE (66 aa)). Ser-484 is modified (phosphoserine). Position 485 is a phosphothreonine (Thr-485). Residues Cys-561, Cys-562, and Cys-565 are each lipidated (S-palmitoyl cysteine). Ser-566 and Ser-568 each carry phosphoserine.

Belongs to the protein kinase superfamily. AGC Ser/Thr protein kinase family. GPRK subfamily. In terms of assembly, interacts with GIT1. Expressed in the brain in striatal neurons.

The protein localises to the membrane. The enzyme catalyses [G-protein-coupled receptor] + ATP = [G-protein-coupled receptor]-phosphate + ADP + H(+). Functionally, specifically phosphorylates the activated forms of G protein-coupled receptors. Such receptor phosphorylation initiates beta-arrestin-mediated receptor desensitization, internalization, and signaling events leading to their desensitization. Seems to be involved in the desensitization of D2-like dopamine receptors in striatum and chemokine receptor CXCR4 which is critical for CXCL12-induced cell chemotaxis. Phosphorylates rhodopsin (RHO) (in vitro) and a non G-protein-coupled receptor, LRP6 during Wnt signaling (in vitro). This Mus musculus (Mouse) protein is G protein-coupled receptor kinase 6 (Grk6).